The primary structure comprises 485 residues: tRNA sulfurtransferase (485 aa).

The THUMP domain maps to 61–165 (EELIALLQRI…DDKMMLVKTR (105 aa)). ATP is bound by residues 183–184 (LI), Lys265, Gly287, and Gln296. Cysteines 344 and 456 form a disulfide. Residues 404–483 (LGENEVILDI…FSNVRVFAKN (80 aa)) form the Rhodanese domain. Cys456 functions as the Cysteine persulfide intermediate in the catalytic mechanism.

Belongs to the ThiI family.

The protein localises to the cytoplasm. The enzyme catalyses [ThiI sulfur-carrier protein]-S-sulfanyl-L-cysteine + a uridine in tRNA + 2 reduced [2Fe-2S]-[ferredoxin] + ATP + H(+) = [ThiI sulfur-carrier protein]-L-cysteine + a 4-thiouridine in tRNA + 2 oxidized [2Fe-2S]-[ferredoxin] + AMP + diphosphate. It catalyses the reaction [ThiS sulfur-carrier protein]-C-terminal Gly-Gly-AMP + S-sulfanyl-L-cysteinyl-[cysteine desulfurase] + AH2 = [ThiS sulfur-carrier protein]-C-terminal-Gly-aminoethanethioate + L-cysteinyl-[cysteine desulfurase] + A + AMP + 2 H(+). It participates in cofactor biosynthesis; thiamine diphosphate biosynthesis. Functionally, catalyzes the ATP-dependent transfer of a sulfur to tRNA to produce 4-thiouridine in position 8 of tRNAs, which functions as a near-UV photosensor. Also catalyzes the transfer of sulfur to the sulfur carrier protein ThiS, forming ThiS-thiocarboxylate. This is a step in the synthesis of thiazole, in the thiamine biosynthesis pathway. The sulfur is donated as persulfide by IscS. This is tRNA sulfurtransferase from Haemophilus influenzae (strain 86-028NP).